Reading from the N-terminus, the 240-residue chain is Uridylate kinase (240 aa).

13 to 16 (KLSG) provides a ligand contact to ATP. The involved in allosteric activation by GTP stretch occupies residues 21 to 26 (GDKGFG). G55 is a binding site for UMP. ATP contacts are provided by G56 and R60. Residues D75 and 136-143 (IGNPYFST) each bind UMP. ATP is bound by residues N164, Y170, and D173.

This sequence belongs to the UMP kinase family. As to quaternary structure, homohexamer.

It localises to the cytoplasm. The enzyme catalyses UMP + ATP = UDP + ADP. It participates in pyrimidine metabolism; CTP biosynthesis via de novo pathway; UDP from UMP (UMPK route): step 1/1. Allosterically activated by GTP. Inhibited by UTP. Functionally, catalyzes the reversible phosphorylation of UMP to UDP. This Staphylococcus haemolyticus (strain JCSC1435) protein is Uridylate kinase.